We begin with the raw amino-acid sequence, 974 residues long: UvrABC system protein A (974 aa).

ATP is bound at residue G34–S41. 2 consecutive ABC transporter domains span residues W331–L610 and I630–K959. G663–S670 is an ATP binding site. The C4-type zinc-finger motif lies at C762–C788.

It belongs to the ABC transporter superfamily. UvrA family. As to quaternary structure, forms a heterotetramer with UvrB during the search for lesions.

It localises to the cytoplasm. Functionally, the UvrABC repair system catalyzes the recognition and processing of DNA lesions. UvrA is an ATPase and a DNA-binding protein. A damage recognition complex composed of 2 UvrA and 2 UvrB subunits scans DNA for abnormalities. When the presence of a lesion has been verified by UvrB, the UvrA molecules dissociate. This Brucella suis biovar 1 (strain 1330) protein is UvrABC system protein A.